Reading from the N-terminus, the 341-residue chain is DNA-directed RNA polymerase subunit alpha (341 aa).

An alpha N-terminal domain (alpha-NTD) region spans residues 1–233; that stretch reads MIRDEIPISA…NLFIPFLHAE (233 aa). An alpha C-terminal domain (alpha-CTD) region spans residues 265 to 341; sequence TKGVTFKHIF…NLPKNKLHFH (77 aa).

It belongs to the RNA polymerase alpha chain family. In terms of assembly, in plastids the minimal PEP RNA polymerase catalytic core is composed of four subunits: alpha, beta, beta', and beta''. When a (nuclear-encoded) sigma factor is associated with the core the holoenzyme is formed, which can initiate transcription.

The protein resides in the plastid. Its subcellular location is the chloroplast. It carries out the reaction RNA(n) + a ribonucleoside 5'-triphosphate = RNA(n+1) + diphosphate. In terms of biological role, DNA-dependent RNA polymerase catalyzes the transcription of DNA into RNA using the four ribonucleoside triphosphates as substrates. This Takakia lepidozioides (Moss) protein is DNA-directed RNA polymerase subunit alpha.